Reading from the N-terminus, the 393-residue chain is CCA-adding enzyme (393 aa).

ATP-binding residues include G27 and R30. Positions 27 and 30 each coordinate CTP. D40 and D42 together coordinate Mg(2+). R111, D154, R157, R160, and R163 together coordinate ATP. 5 residues coordinate CTP: R111, D154, R157, R160, and R163.

It belongs to the tRNA nucleotidyltransferase/poly(A) polymerase family. Bacterial CCA-adding enzyme type 3 subfamily. As to quaternary structure, homodimer. Requires Mg(2+) as cofactor.

The catalysed reaction is a tRNA precursor + 2 CTP + ATP = a tRNA with a 3' CCA end + 3 diphosphate. It carries out the reaction a tRNA with a 3' CCA end + 2 CTP + ATP = a tRNA with a 3' CCACCA end + 3 diphosphate. In terms of biological role, catalyzes the addition and repair of the essential 3'-terminal CCA sequence in tRNAs without using a nucleic acid template. Adds these three nucleotides in the order of C, C, and A to the tRNA nucleotide-73, using CTP and ATP as substrates and producing inorganic pyrophosphate. tRNA 3'-terminal CCA addition is required both for tRNA processing and repair. Also involved in tRNA surveillance by mediating tandem CCA addition to generate a CCACCA at the 3' terminus of unstable tRNAs. While stable tRNAs receive only 3'-terminal CCA, unstable tRNAs are marked with CCACCA and rapidly degraded. This chain is CCA-adding enzyme, found in Listeria monocytogenes serotype 4b (strain F2365).